Reading from the N-terminus, the 88-residue chain is MRATRVLLNSAKKSSIAANLPIEMYPLFAAMGVAVASGCFFTYRHFAHDKELRLWKNANLSNLDNVLNAEVHKNEAGNKDEKKEENKD.

A helical transmembrane segment spans residues 25 to 47 (YPLFAAMGVAVASGCFFTYRHFA).

It belongs to the UPF0495 family.

The protein resides in the membrane. This is UPF0495 protein DEHA2C16280g from Debaryomyces hansenii (strain ATCC 36239 / CBS 767 / BCRC 21394 / JCM 1990 / NBRC 0083 / IGC 2968) (Yeast).